A 542-amino-acid polypeptide reads, in one-letter code: Glutamyl-tRNA(Gln) amidotransferase subunit A, mitochondrial (542 aa).

Residues Lys-55 and Ser-143 each act as charge relay system in the active site. Residue Ser-167 is the Acyl-ester intermediate of the active site.

It belongs to the amidase family. GatA subfamily. Subunit of the heterotrimeric GatCAB amidotransferase (AdT) complex, composed of A, B and C subunits.

It localises to the mitochondrion. It catalyses the reaction L-glutamyl-tRNA(Gln) + L-glutamine + ATP + H2O = L-glutaminyl-tRNA(Gln) + L-glutamate + ADP + phosphate + H(+). Allows the formation of correctly charged Gln-tRNA(Gln) through the transamidation of misacylated Glu-tRNA(Gln) in the mitochondria. The reaction takes place in the presence of glutamine and ATP through an activated gamma-phospho-Glu-tRNA(Gln). In Neurospora crassa (strain ATCC 24698 / 74-OR23-1A / CBS 708.71 / DSM 1257 / FGSC 987), this protein is Glutamyl-tRNA(Gln) amidotransferase subunit A, mitochondrial.